The chain runs to 342 residues: MTKLTITRPDDWHVHLRDGDVLTDTVRDTGRYMGRAIIMPNLVPPATNVDSALAYYERIKAVCTTNFEPLMVLYLTDNTTAEDIRAAKASGKVVAAKLYPAGATTNSDSGVTDVKNIYPVLEAMQEVGMLFLVHGEVTDSSIDIFDREATFINNTLKQVVADFPSLKIVLEHITTKDAVDFVMGASDNVAATITAHHLLYNRNHMLAGGIRPHFYCLPILKRNTHQQALLAAAASGSKKFFLGTDSAPHAKDRKEAACGCAGSYTAHAAIELYAEAFESVGALDKLEAFASFNGPDFYGLPRNTDSITLVKRSWEVPATYPLGDTGVVPIRAGETIDWQVED.

H13 and H15 together coordinate Zn(2+). Substrate is bound by residues 15 to 17 (HLR) and N41. Zn(2+)-binding residues include K97, H134, and H172. K97 is subject to N6-carboxylysine. H134 lines the substrate pocket. L217 is a substrate binding site. D245 serves as a coordination point for Zn(2+). The active site involves D245. The substrate site is built by H249 and A261.

The protein belongs to the metallo-dependent hydrolases superfamily. DHOase family. Class II DHOase subfamily. As to quaternary structure, homodimer. Zn(2+) serves as cofactor.

The enzyme catalyses (S)-dihydroorotate + H2O = N-carbamoyl-L-aspartate + H(+). Its pathway is pyrimidine metabolism; UMP biosynthesis via de novo pathway; (S)-dihydroorotate from bicarbonate: step 3/3. Functionally, catalyzes the reversible cyclization of carbamoyl aspartate to dihydroorotate. The polypeptide is Dihydroorotase (Shewanella loihica (strain ATCC BAA-1088 / PV-4)).